We begin with the raw amino-acid sequence, 217 residues long: Octanoyltransferase (217 aa).

Positions 32–207 constitute a BPL/LPL catalytic domain; sequence SESHDELWIV…TFSQLLGYQH (176 aa). Substrate is bound by residues 71 to 78, 138 to 140, and 151 to 153; these read RGGQVTYH, SLG, and GLA. Cys-169 (acyl-thioester intermediate) is an active-site residue.

It belongs to the LipB family.

It localises to the cytoplasm. The catalysed reaction is octanoyl-[ACP] + L-lysyl-[protein] = N(6)-octanoyl-L-lysyl-[protein] + holo-[ACP] + H(+). Its pathway is protein modification; protein lipoylation via endogenous pathway; protein N(6)-(lipoyl)lysine from octanoyl-[acyl-carrier-protein]: step 1/2. Catalyzes the transfer of endogenously produced octanoic acid from octanoyl-acyl-carrier-protein onto the lipoyl domains of lipoate-dependent enzymes. Lipoyl-ACP can also act as a substrate although octanoyl-ACP is likely to be the physiological substrate. The polypeptide is Octanoyltransferase (Shewanella baltica (strain OS155 / ATCC BAA-1091)).